The following is a 144-amino-acid chain: 3-hydroxyacyl-[acyl-carrier-protein] dehydratase FabZ (144 aa).

His-49 is a catalytic residue.

It belongs to the thioester dehydratase family. FabZ subfamily.

The protein localises to the cytoplasm. The catalysed reaction is a (3R)-hydroxyacyl-[ACP] = a (2E)-enoyl-[ACP] + H2O. Involved in unsaturated fatty acids biosynthesis. Catalyzes the dehydration of short chain beta-hydroxyacyl-ACPs and long chain saturated and unsaturated beta-hydroxyacyl-ACPs. The chain is 3-hydroxyacyl-[acyl-carrier-protein] dehydratase FabZ from Alkaliphilus oremlandii (strain OhILAs) (Clostridium oremlandii (strain OhILAs)).